A 252-amino-acid polypeptide reads, in one-letter code: Protein PF0476 (252 aa).

Belongs to the CinA family.

The polypeptide is Protein PF0476 (Pyrococcus furiosus (strain ATCC 43587 / DSM 3638 / JCM 8422 / Vc1)).